The sequence spans 70 residues: DNA gyrase inhibitor YacG (70 aa).

Residues C20, C23, C35, and C39 each coordinate Zn(2+).

It belongs to the DNA gyrase inhibitor YacG family. As to quaternary structure, interacts with GyrB. The cofactor is Zn(2+).

Its function is as follows. Inhibits all the catalytic activities of DNA gyrase by preventing its interaction with DNA. Acts by binding directly to the C-terminal domain of GyrB, which probably disrupts DNA binding by the gyrase. The chain is DNA gyrase inhibitor YacG from Rhizobium etli (strain CIAT 652).